The sequence spans 197 residues: Crossover junction endodeoxyribonuclease RuvC (197 aa).

Residues Asp-7, Glu-68, and Asp-141 contribute to the active site. Asp-7, Glu-68, and Asp-141 together coordinate Mg(2+). Composition is skewed to low complexity over residues 165 to 181 and 188 to 197; these read AAPA…TPAR and APARRPAGAS. Residues 165–197 are disordered; that stretch reads AAPAAPVSRPAPATPARRSPRPAAPARRPAGAS.

The protein belongs to the RuvC family. Homodimer which binds Holliday junction (HJ) DNA. The HJ becomes 2-fold symmetrical on binding to RuvC with unstacked arms; it has a different conformation from HJ DNA in complex with RuvA. In the full resolvosome a probable DNA-RuvA(4)-RuvB(12)-RuvC(2) complex forms which resolves the HJ. The cofactor is Mg(2+).

The protein resides in the cytoplasm. The enzyme catalyses Endonucleolytic cleavage at a junction such as a reciprocal single-stranded crossover between two homologous DNA duplexes (Holliday junction).. The RuvA-RuvB-RuvC complex processes Holliday junction (HJ) DNA during genetic recombination and DNA repair. Endonuclease that resolves HJ intermediates. Cleaves cruciform DNA by making single-stranded nicks across the HJ at symmetrical positions within the homologous arms, yielding a 5'-phosphate and a 3'-hydroxyl group; requires a central core of homology in the junction. The consensus cleavage sequence is 5'-(A/T)TT(C/G)-3'. Cleavage occurs on the 3'-side of the TT dinucleotide at the point of strand exchange. HJ branch migration catalyzed by RuvA-RuvB allows RuvC to scan DNA until it finds its consensus sequence, where it cleaves and resolves the cruciform DNA. This chain is Crossover junction endodeoxyribonuclease RuvC, found in Frankia alni (strain DSM 45986 / CECT 9034 / ACN14a).